Consider the following 364-residue polypeptide: tRNA 2-selenouridine synthase (364 aa).

The Rhodanese domain maps to 14–137; sequence LIADTPIIDV…LRQTAIQATI (124 aa). Cys97 acts as the S-selanylcysteine intermediate in catalysis.

The protein belongs to the SelU family. In terms of assembly, monomer.

The enzyme catalyses 5-methylaminomethyl-2-thiouridine(34) in tRNA + selenophosphate + (2E)-geranyl diphosphate + H2O + H(+) = 5-methylaminomethyl-2-selenouridine(34) in tRNA + (2E)-thiogeraniol + phosphate + diphosphate. It carries out the reaction 5-methylaminomethyl-2-thiouridine(34) in tRNA + (2E)-geranyl diphosphate = 5-methylaminomethyl-S-(2E)-geranyl-thiouridine(34) in tRNA + diphosphate. It catalyses the reaction 5-methylaminomethyl-S-(2E)-geranyl-thiouridine(34) in tRNA + selenophosphate + H(+) = 5-methylaminomethyl-2-(Se-phospho)selenouridine(34) in tRNA + (2E)-thiogeraniol. The catalysed reaction is 5-methylaminomethyl-2-(Se-phospho)selenouridine(34) in tRNA + H2O = 5-methylaminomethyl-2-selenouridine(34) in tRNA + phosphate. Functionally, involved in the post-transcriptional modification of the uridine at the wobble position (U34) of tRNA(Lys), tRNA(Glu) and tRNA(Gln). Catalyzes the conversion of 2-thiouridine (S2U-RNA) to 2-selenouridine (Se2U-RNA). Acts in a two-step process involving geranylation of 2-thiouridine (S2U) to S-geranyl-2-thiouridine (geS2U) and subsequent selenation of the latter derivative to 2-selenouridine (Se2U) in the tRNA chain. The polypeptide is tRNA 2-selenouridine synthase (Shigella flexneri).